The following is a 316-amino-acid chain: Ribosomal RNA small subunit methyltransferase H (316 aa).

Residues 35 to 37, D55, F84, D105, and Q112 each bind S-adenosyl-L-methionine; that span reads AGH.

The protein belongs to the methyltransferase superfamily. RsmH family.

The protein resides in the cytoplasm. It catalyses the reaction cytidine(1402) in 16S rRNA + S-adenosyl-L-methionine = N(4)-methylcytidine(1402) in 16S rRNA + S-adenosyl-L-homocysteine + H(+). Its function is as follows. Specifically methylates the N4 position of cytidine in position 1402 (C1402) of 16S rRNA. This is Ribosomal RNA small subunit methyltransferase H from Streptococcus pneumoniae serotype 4 (strain ATCC BAA-334 / TIGR4).